The primary structure comprises 304 residues: Methionyl-tRNA formyltransferase (304 aa).

109-112 is a (6S)-5,6,7,8-tetrahydrofolate binding site; it reads SDLP.

It belongs to the Fmt family.

The catalysed reaction is L-methionyl-tRNA(fMet) + (6R)-10-formyltetrahydrofolate = N-formyl-L-methionyl-tRNA(fMet) + (6S)-5,6,7,8-tetrahydrofolate + H(+). Attaches a formyl group to the free amino group of methionyl-tRNA(fMet). The formyl group appears to play a dual role in the initiator identity of N-formylmethionyl-tRNA by promoting its recognition by IF2 and preventing the misappropriation of this tRNA by the elongation apparatus. This Rickettsia bellii (strain RML369-C) protein is Methionyl-tRNA formyltransferase.